We begin with the raw amino-acid sequence, 349 residues long: UDP-N-acetylenolpyruvoylglucosamine reductase (349 aa).

Residues 25-197 (GIAARARFAA…VAVTFRLPKQ (173 aa)) enclose the FAD-binding PCMH-type domain. Arginine 173 is a catalytic residue. Residue serine 249 is the Proton donor of the active site. Glutamate 345 is a catalytic residue.

It belongs to the MurB family. FAD is required as a cofactor.

The protein localises to the cytoplasm. The enzyme catalyses UDP-N-acetyl-alpha-D-muramate + NADP(+) = UDP-N-acetyl-3-O-(1-carboxyvinyl)-alpha-D-glucosamine + NADPH + H(+). It participates in cell wall biogenesis; peptidoglycan biosynthesis. In terms of biological role, cell wall formation. This is UDP-N-acetylenolpyruvoylglucosamine reductase from Burkholderia orbicola (strain MC0-3).